A 489-amino-acid polypeptide reads, in one-letter code: Coronin-1B (489 aa).

Ser2 is subject to Phosphoserine; by PKC. 6 WD repeats span residues 18-72 (QPVK…GRID), 73-122 (KAYP…SPLT), 123-166 (EPVV…GTAE), 167-210 (ELYR…RGTL), 211-256 (VAER…ENLE), and 257-296 (EPMA…RYFE). The tract at residues 408–444 (RRNVLSDSRPAMAPGSSHLGAPASTTTAADATPSGSL) is disordered. The span at 428 to 441 (APASTTTAADATPS) shows a compositional bias: low complexity. The stretch at 449–474 (EAGKLEEVMQELRALRALVKEQGDRI) forms a coiled coil.

This sequence belongs to the WD repeat coronin family. As to quaternary structure, forms homooligomers, but does not form complexes with the other coronins. Interacts with Arp2/3 complex components, including ACTR2, ARPC1B and ARPC2. Binds actin. In terms of processing, phosphorylation by PKC on Ser-2 regulates the interaction with the Arp2/3 complex and cell motility in fibroblasts. Phosphorylation does not seem to affect subcellular location.

It is found in the cytoplasm. The protein localises to the cytoskeleton. Its subcellular location is the stress fiber. Its function is as follows. Regulates leading edge dynamics and cell motility in fibroblasts. May be involved in cytokinesis and signal transduction. This is Coronin-1B (CORO1B) from Homo sapiens (Human).